The primary structure comprises 398 residues: Succinate--CoA ligase [ADP-forming] subunit beta (398 aa).

In terms of domain architecture, ATP-grasp spans 9-254 (KAVLREFGVP…ESEEDAKEIE (246 aa)). ATP contacts are provided by residues Lys-46, 53-55 (GRG), Glu-109, Ser-112, and Glu-117. Mg(2+) is bound by residues Asn-209 and Asp-223. Residues Asn-274 and 331 to 333 (GIM) each bind substrate.

The protein belongs to the succinate/malate CoA ligase beta subunit family. Heterotetramer of two alpha and two beta subunits. The cofactor is Mg(2+).

It catalyses the reaction succinate + ATP + CoA = succinyl-CoA + ADP + phosphate. The enzyme catalyses GTP + succinate + CoA = succinyl-CoA + GDP + phosphate. It functions in the pathway carbohydrate metabolism; tricarboxylic acid cycle; succinate from succinyl-CoA (ligase route): step 1/1. Functionally, succinyl-CoA synthetase functions in the citric acid cycle (TCA), coupling the hydrolysis of succinyl-CoA to the synthesis of either ATP or GTP and thus represents the only step of substrate-level phosphorylation in the TCA. The beta subunit provides nucleotide specificity of the enzyme and binds the substrate succinate, while the binding sites for coenzyme A and phosphate are found in the alpha subunit. This is Succinate--CoA ligase [ADP-forming] subunit beta from Rhodopseudomonas palustris (strain HaA2).